The following is a 208-amino-acid chain: Large ribosomal subunit protein uL3 (208 aa).

The interval 116–148 (GFQGVIKRHGQSRGPMAHGSRYHRRPGSMGPVA) is disordered.

This sequence belongs to the universal ribosomal protein uL3 family. Part of the 50S ribosomal subunit. Forms a cluster with proteins L14 and L19.

In terms of biological role, one of the primary rRNA binding proteins, it binds directly near the 3'-end of the 23S rRNA, where it nucleates assembly of the 50S subunit. The protein is Large ribosomal subunit protein uL3 of Streptococcus agalactiae serotype Ia (strain ATCC 27591 / A909 / CDC SS700).